Here is a 613-residue protein sequence, read N- to C-terminus: Dihydroxy-acid dehydratase (613 aa).

D81 lines the Mg(2+) pocket. Residue C122 coordinates [2Fe-2S] cluster. Positions 123 and 124 each coordinate Mg(2+). K124 is subject to N6-carboxylysine. C195 contributes to the [2Fe-2S] cluster binding site. Position 491 (E491) interacts with Mg(2+). The active-site Proton acceptor is the S517.

It belongs to the IlvD/Edd family. Homodimer. [2Fe-2S] cluster is required as a cofactor. The cofactor is Mg(2+).

It catalyses the reaction (2R)-2,3-dihydroxy-3-methylbutanoate = 3-methyl-2-oxobutanoate + H2O. It carries out the reaction (2R,3R)-2,3-dihydroxy-3-methylpentanoate = (S)-3-methyl-2-oxopentanoate + H2O. The protein operates within amino-acid biosynthesis; L-isoleucine biosynthesis; L-isoleucine from 2-oxobutanoate: step 3/4. It participates in amino-acid biosynthesis; L-valine biosynthesis; L-valine from pyruvate: step 3/4. In terms of biological role, functions in the biosynthesis of branched-chain amino acids. Catalyzes the dehydration of (2R,3R)-2,3-dihydroxy-3-methylpentanoate (2,3-dihydroxy-3-methylvalerate) into 2-oxo-3-methylpentanoate (2-oxo-3-methylvalerate) and of (2R)-2,3-dihydroxy-3-methylbutanoate (2,3-dihydroxyisovalerate) into 2-oxo-3-methylbutanoate (2-oxoisovalerate), the penultimate precursor to L-isoleucine and L-valine, respectively. This chain is Dihydroxy-acid dehydratase, found in Aliivibrio fischeri (strain ATCC 700601 / ES114) (Vibrio fischeri).